Reading from the N-terminus, the 677-residue chain is Methionine--tRNA ligase (677 aa).

Residues 15-25 (PYANGSIHLGH) carry the 'HIGH' region motif. Residues cysteine 146, cysteine 149, cysteine 159, and cysteine 162 each contribute to the Zn(2+) site. The 'KMSKS' region signature appears at 333 to 337 (KMSKS). Lysine 336 provides a ligand contact to ATP. The tRNA-binding domain occupies 575 to 677 (DFAKVDLRVA…AGAKPGHQVK (103 aa)).

It belongs to the class-I aminoacyl-tRNA synthetase family. MetG type 1 subfamily. In terms of assembly, homodimer. It depends on Zn(2+) as a cofactor.

It localises to the cytoplasm. The catalysed reaction is tRNA(Met) + L-methionine + ATP = L-methionyl-tRNA(Met) + AMP + diphosphate. Its function is as follows. Is required not only for elongation of protein synthesis but also for the initiation of all mRNA translation through initiator tRNA(fMet) aminoacylation. The protein is Methionine--tRNA ligase of Escherichia coli O17:K52:H18 (strain UMN026 / ExPEC).